The primary structure comprises 417 residues: MDALLIQGGNPLAGEVRISGAKNAALPILTASLLTAEPLRLGNVPHLKDISTMLALLGHMGVRVTLDDKNHVTLSGDSIPHKEAPYEMVKTMRAAILVLGPTLARFGEARVSLPGGCAIGSRPVDLHIKGLQAMGADISIEHGYIHARCKRLQGARIVMDMVTVTGTENLMMAAALAEGTTVLENAAREPEVVDLARCLIAMGAKIEGAGTDVITVHGVEALHGAEYSVMADRIETGTFLVAAAMTGGRVRATHTSPDTLEAVISKLREAGAKVSVGDDWIEVESTGKLDSVDVRTAPHPAFPTDMQAQFMAMNTIAVGAASVTETIFENRFMHVQELRRLGANIEVSGHTALVRGVARLDGATVMATDLRASACLVLAGLVAAGETTIERIYHLDRGYERIEEKLTQLGGRIKRVH.

K22–N23 is a binding site for phosphoenolpyruvate. R93 serves as a coordination point for UDP-N-acetyl-alpha-D-glucosamine. C117 serves as the catalytic Proton donor. Residue C117 is modified to 2-(S-cysteinyl)pyruvic acid O-phosphothioketal. UDP-N-acetyl-alpha-D-glucosamine contacts are provided by residues R122–L126, D305, and I327.

This sequence belongs to the EPSP synthase family. MurA subfamily.

The protein localises to the cytoplasm. It carries out the reaction phosphoenolpyruvate + UDP-N-acetyl-alpha-D-glucosamine = UDP-N-acetyl-3-O-(1-carboxyvinyl)-alpha-D-glucosamine + phosphate. It functions in the pathway cell wall biogenesis; peptidoglycan biosynthesis. Cell wall formation. Adds enolpyruvyl to UDP-N-acetylglucosamine. The chain is UDP-N-acetylglucosamine 1-carboxyvinyltransferase from Thiobacillus denitrificans (strain ATCC 25259 / T1).